We begin with the raw amino-acid sequence, 175 residues long: Large ribosomal subunit protein uL6 (175 aa).

Belongs to the universal ribosomal protein uL6 family. In terms of assembly, part of the 50S ribosomal subunit.

Functionally, this protein binds to the 23S rRNA, and is important in its secondary structure. It is located near the subunit interface in the base of the L7/L12 stalk, and near the tRNA binding site of the peptidyltransferase center. This is Large ribosomal subunit protein uL6 from Xanthomonas oryzae pv. oryzae (strain MAFF 311018).